Consider the following 724-residue polypeptide: Probable metal-nicotianamine transporter YSL13 (724 aa).

The interval 1–54 (MATVPTPSEAHGGATPTAADVEMVEASELRRRGKPSGDRATGPSRDGAAAAAEE) is disordered. 14 helical membrane passes run 80–100 (AFVVSFFLVIMFSVIVMKLNL), 103–123 (GIIPSLNVSAGLLGFFFVRLW), 148–168 (CVVAGYDIAFSGGFGNYILSM), 190–210 (LGWIIGFLFLVSFIGLFGLVP), 252–272 (LGIFFILSFFWGFFQWFYTAT), 310–330 (IVNVSVLLGGILSWGIMWPLI), 355–375 (VFIAIALILGDGLYNFLKMII), 423–443 (IPWYVAYGGYAVVAAISIGTV), 455–475 (ILVAYIVAPILAFCNAYGTGL), 487–507 (LAIFAFGAWTGASHGGVLAGL), 541–561 (FVSQVIGTAMGCVIAPCVFWL), 603–623 (LNLCYAFFAAAIVVNLIRDLV), 640–660 (FYIGSYFAIDMFIGTVILFVW), and 675–695 (VASGMICGDGIWVLPQSVLAL).

It belongs to the YSL (TC 2.A.67.2) family. Expressed in leaves and at low levels in root cortex.

Its subcellular location is the membrane. In terms of biological role, may be involved in the transport of nicotianamine-chelated metals. The protein is Probable metal-nicotianamine transporter YSL13 (YSL13) of Oryza sativa subsp. japonica (Rice).